Consider the following 382-residue polypeptide: Dual-specificity RNA methyltransferase RlmN (382 aa).

Glu95 serves as the catalytic Proton acceptor. The Radical SAM core domain occupies 101–348 (EDDRGTLCIS…TTVRKTRGDD (248 aa)). Cysteines 108 and 353 form a disulfide. Residues Cys115, Cys119, and Cys122 each contribute to the [4Fe-4S] cluster site. Residues 179-180 (GE), Ser211, 233-235 (SLH), and Asn310 contribute to the S-adenosyl-L-methionine site. The active-site S-methylcysteine intermediate is the Cys353.

Belongs to the radical SAM superfamily. RlmN family. The cofactor is [4Fe-4S] cluster.

The protein resides in the cytoplasm. The enzyme catalyses adenosine(2503) in 23S rRNA + 2 reduced [2Fe-2S]-[ferredoxin] + 2 S-adenosyl-L-methionine = 2-methyladenosine(2503) in 23S rRNA + 5'-deoxyadenosine + L-methionine + 2 oxidized [2Fe-2S]-[ferredoxin] + S-adenosyl-L-homocysteine. It carries out the reaction adenosine(37) in tRNA + 2 reduced [2Fe-2S]-[ferredoxin] + 2 S-adenosyl-L-methionine = 2-methyladenosine(37) in tRNA + 5'-deoxyadenosine + L-methionine + 2 oxidized [2Fe-2S]-[ferredoxin] + S-adenosyl-L-homocysteine. In terms of biological role, specifically methylates position 2 of adenine 2503 in 23S rRNA and position 2 of adenine 37 in tRNAs. m2A2503 modification seems to play a crucial role in the proofreading step occurring at the peptidyl transferase center and thus would serve to optimize ribosomal fidelity. The sequence is that of Dual-specificity RNA methyltransferase RlmN from Bordetella pertussis (strain Tohama I / ATCC BAA-589 / NCTC 13251).